Here is a 95-residue protein sequence, read N- to C-terminus: Large ribosomal subunit protein bL25 (95 aa).

The protein belongs to the bacterial ribosomal protein bL25 family. As to quaternary structure, part of the 50S ribosomal subunit; part of the 5S rRNA/L5/L18/L25 subcomplex. Contacts the 5S rRNA. Binds to the 5S rRNA independently of L5 and L18.

Its function is as follows. This is one of the proteins that binds to the 5S RNA in the ribosome where it forms part of the central protuberance. This chain is Large ribosomal subunit protein bL25, found in Shewanella putrefaciens (strain CN-32 / ATCC BAA-453).